Consider the following 353-residue polypeptide: Photosystem II D2 protein (353 aa).

At Thr-2 the chain carries N-acetylthreonine. Phosphothreonine is present on Thr-2. The chain crosses the membrane as a helical span at residues 41 to 61 (CAYFALGGWFTGTTFVTSWYT). His-118 lines the chlorophyll a pocket. Residues 125–141 (GFMLRQFELARSVQLRP) traverse the membrane as a helical segment. Positions 130 and 143 each coordinate pheophytin a. The chain crosses the membrane as a helical span at residues 153 to 166 (VFVSVFLIYPLGQS). Residue His-198 participates in chlorophyll a binding. Residues 208–228 (AALLCAIHGATVENTLFEDGD) traverse the membrane as a helical segment. A plastoquinone-binding residues include His-215 and Phe-262. Fe cation is bound at residue His-215. His-269 is a Fe cation binding site. Residues 279–295 (GLWMSALGVVGLALNLR) traverse the membrane as a helical segment.

It belongs to the reaction center PufL/M/PsbA/D family. In terms of assembly, PSII is composed of 1 copy each of membrane proteins PsbA, PsbB, PsbC, PsbD, PsbE, PsbF, PsbH, PsbI, PsbJ, PsbK, PsbL, PsbM, PsbT, PsbX, PsbY, PsbZ, Psb30/Ycf12, at least 3 peripheral proteins of the oxygen-evolving complex and a large number of cofactors. It forms dimeric complexes. Requires The D1/D2 heterodimer binds P680, chlorophylls that are the primary electron donor of PSII, and subsequent electron acceptors. It shares a non-heme iron and each subunit binds pheophytin, quinone, additional chlorophylls, carotenoids and lipids. There is also a Cl(-1) ion associated with D1 and D2, which is required for oxygen evolution. The PSII complex binds additional chlorophylls, carotenoids and specific lipids. as cofactor.

The protein localises to the plastid. It is found in the chloroplast thylakoid membrane. It carries out the reaction 2 a plastoquinone + 4 hnu + 2 H2O = 2 a plastoquinol + O2. Photosystem II (PSII) is a light-driven water:plastoquinone oxidoreductase that uses light energy to abstract electrons from H(2)O, generating O(2) and a proton gradient subsequently used for ATP formation. It consists of a core antenna complex that captures photons, and an electron transfer chain that converts photonic excitation into a charge separation. The D1/D2 (PsbA/PsbD) reaction center heterodimer binds P680, the primary electron donor of PSII as well as several subsequent electron acceptors. D2 is needed for assembly of a stable PSII complex. The polypeptide is Photosystem II D2 protein (Coffea arabica (Arabian coffee)).